Reading from the N-terminus, the 1546-residue chain is Hybrid signal transduction histidine kinase D (1546 aa).

A coiled-coil region spans residues M36 to S63. Positions K65–H131 constitute a PAS domain. One can recognise a PAC domain in the interval I139 to R193. Residues N218–P440 enclose the Histidine kinase 1 domain. H221 is modified (phosphohistidine; by autocatalysis). One can recognise a Response regulatory 1 domain in the interval I571–M686. D619 is modified (4-aspartylphosphate). The region spanning N747–K1010 is the Histidine kinase 2 domain. H750 bears the Phosphohistidine; by autocatalysis mark. Low complexity-rich tracts occupy residues S1013–L1031 and N1042–N1146. Disordered stretches follow at residues S1013–K1148, N1266–S1285, and P1313–S1350. The segment covering P1313–P1346 has biased composition (low complexity). The region spanning Q1359–I1483 is the Response regulatory 2 domain. D1412 is subject to 4-aspartylphosphate. The disordered stretch occupies residues Q1500–Q1546. Over residues N1501–G1526 the composition is skewed to low complexity.

It catalyses the reaction ATP + protein L-histidine = ADP + protein N-phospho-L-histidine.. Functionally, acts as a receptor histidine kinase for a signal transduction pathway. This protein undergoes an ATP-dependent autophosphorylation at a conserved histidine residue in the kinase core, and a phosphoryl group is then transferred to a conserved aspartate residue in the receiver domain. The protein is Hybrid signal transduction histidine kinase D (dhkD) of Dictyostelium discoideum (Social amoeba).